Here is a 532-residue protein sequence, read N- to C-terminus: Probable cytochrome c oxidase subunit 1 (532 aa).

8 helical membrane-spanning segments follow: residues 33–53, 74–94, 95–115, 118–138, 163–183, 200–220, 252–272, and 284–304; these read IMYIIFAVFAGIVGGLFSLLF, VLITAHAVIMVFFMIMPALFG, GFGNYFVPLLIGAPDMAFPRL, ISFWLLVPAFLLLMGSAFVDG, MAIFSLHLTGLSSILGSINLI, PLFVWSILVTAFLIILAMPVL, LFWFFGHPEVYIVILPGFGIV, and IFGYQGMIGAMVIIGFVGFIV. Residue His-79 coordinates Fe(II)-heme a. Residues His-258 and Tyr-262 each coordinate Cu cation. Cu cation contacts are provided by His-307 and His-308. 2 helical membrane passes run 318–338 and 355–375; these read ALIYFTAGTMIIAVPTGIKIF and MLFSIGFIILFTIGGVTGIIL. His-393 is a heme a3 binding site. The next 3 helical transmembrane spans lie at 394–414, 431–451, and 473–493; these read FHYTMSLGALFTAFAGFYYWF, FWITFIGVNLTFFPQHFLGLA, and IGAGISMFAALYFVFIVFYTL. His-395 is a binding site for Fe(II)-heme a.

It belongs to the heme-copper respiratory oxidase family.

It is found in the cell membrane. The enzyme catalyses 4 Fe(II)-[cytochrome c] + O2 + 8 H(+)(in) = 4 Fe(III)-[cytochrome c] + 2 H2O + 4 H(+)(out). The protein operates within energy metabolism; oxidative phosphorylation. Cytochrome c oxidase is the component of the respiratory chain that catalyzes the reduction of oxygen to water. Subunits 1-3 form the functional core of the enzyme complex. CO I is the catalytic subunit of the enzyme. Electrons originating in cytochrome c are transferred via the copper A center of subunit 2 and heme A of subunit 1 to the bimetallic center formed by heme A3 and copper B. The polypeptide is Probable cytochrome c oxidase subunit 1 (ctaD) (Rickettsia conorii (strain ATCC VR-613 / Malish 7)).